The primary structure comprises 127 residues: Prefoldin subunit 6 (127 aa).

The residue at position 2 (Ala2) is an N-acetylalanine. An N6-acetyllysine modification is found at Lys21. Lys66 is modified (N6-acetyllysine; alternate). Lys66 is covalently cross-linked (Glycyl lysine isopeptide (Lys-Gly) (interchain with G-Cter in SUMO1); alternate). Residue Lys66 forms a Glycyl lysine isopeptide (Lys-Gly) (interchain with G-Cter in SUMO2); alternate linkage.

The protein belongs to the prefoldin subunit beta family. Heterohexamer of two PFD-alpha type and four PFD-beta type subunits. Component of the PAQosome complex which is responsible for the biogenesis of several protein complexes and which consists of R2TP complex members RUVBL1, RUVBL2, RPAP3 and PIH1D1, URI complex members PFDN2, PFDN6, PDRG1, UXT and URI1 as well as ASDURF, POLR2E and DNAAF10/WDR92.

Its function is as follows. Binds specifically to cytosolic chaperonin (c-CPN) and transfers target proteins to it. Binds to nascent polypeptide chain and promotes folding in an environment in which there are many competing pathways for nonnative proteins. The protein is Prefoldin subunit 6 (Pfdn6) of Mus musculus (Mouse).